The sequence spans 107 residues: Phosphoribosyl-ATP pyrophosphatase (107 aa).

The protein belongs to the PRA-PH family.

It localises to the cytoplasm. The catalysed reaction is 1-(5-phospho-beta-D-ribosyl)-ATP + H2O = 1-(5-phospho-beta-D-ribosyl)-5'-AMP + diphosphate + H(+). It participates in amino-acid biosynthesis; L-histidine biosynthesis; L-histidine from 5-phospho-alpha-D-ribose 1-diphosphate: step 2/9. The chain is Phosphoribosyl-ATP pyrophosphatase from Caulobacter sp. (strain K31).